Here is a 130-residue protein sequence, read N- to C-terminus: MSVVRSSVHARWIVGKVIGTKMQKTAKVRVTRLVLDPYLLKYFNKRKTYFAHDALQQCTVGDIVLLRALPVPRAKHVKHELAEIVFKVGKVIDPVTGKPCAGTTYLESPLSSETTQLSKNLEELNISSAQ.

The transit peptide at 1–20 (MSVVRSSVHARWIVGKVIGT) directs the protein to the mitochondrion.

This sequence belongs to the universal ribosomal protein uS17 family. Component of the mitochondrial small ribosomal subunit (mt-SSU). Mature mammalian 55S mitochondrial ribosomes consist of a small (28S) and a large (39S) subunit. The 28S small subunit contains a 12S ribosomal RNA (12S mt-rRNA) and 30 different proteins. The 39S large subunit contains a 16S rRNA (16S mt-rRNA), a copy of mitochondrial valine transfer RNA (mt-tRNA(Val)), which plays an integral structural role, and 52 different proteins.

Its subcellular location is the mitochondrion. The polypeptide is Small ribosomal subunit protein uS17m (MRPS17) (Homo sapiens (Human)).